Consider the following 481-residue polypeptide: MDIQKNTSLTFLFYDYETFGKNPALDKPSQFSCIQTDIDFNIIGSIQEIFCYPSVDYLPDPESVLITGISPKYTSLFGVNEFEFAKKIYSLFMKSDTCIIGYNNIYFDDEFTRNIFYRNFLNSYEWSWKNGNSRWDMLDLLRACYVLRPEGINWPRNEDNSVSLRLSDISLANNIVHNVAHNASSDVYATMNIAKLIKQKKPKLFNFFFKYRTKKAILTLIDVNSLNPIVYISRFFGVVNRYISYIVPILWHPINSNILVSIDLSQDVQKILNFFKRNSILNVNYKEIFLMGIRFIYVNRCPILIPTNVIRMKDRIRLRINYKLFQNNLVLLRKNIFLKKKLKKFLCSIAEAPKYNGSNVDLKMYNSFFSYIDNNVIKNIHSTLPKRIKINFMKYDNRINQLFILFLARYRPDMLDYSEKYFWIQRYLNIFSYANIQKYENKILKLIVKYKNHVRNVQLLEELFEYVKYTRKNFLKSIFTN.

Positions 12-193 constitute an Exonuclease domain; sequence LFYDYETFGK…SSDVYATMNI (182 aa). Mg(2+) contacts are provided by D15, E17, and D186. Substrate is bound at residue E17. One can recognise an ExoI SH3-like domain in the interval 202 to 350; sequence PKLFNFFFKY…KLKKFLCSIA (149 aa). The ExoI C-terminal domain occupies 356-471; that stretch reads NGSNVDLKMY…ELFEYVKYTR (116 aa).

As to quaternary structure, monomer. Interacts with ssb (via C-terminus); this interaction stimulates the exonuclease activity by recruiting the enzyme to its substrate. Mg(2+) serves as cofactor.

It catalyses the reaction Exonucleolytic cleavage in the 3'- to 5'-direction to yield nucleoside 5'-phosphates.. Its function is as follows. Degrades single-stranded DNA (ssDNA) in a highly processive manner. Also functions as a DNA deoxyribophosphodiesterase that releases deoxyribose-phosphate moieties following the cleavage of DNA at an apurinic/apyrimidinic (AP) site by either an AP endonuclease or AP lyase. The chain is Exodeoxyribonuclease I (sbcB) from Buchnera aphidicola subsp. Baizongia pistaciae (strain Bp).